The chain runs to 223 residues: MYSVVALGGSVVNVDKPERIKETAEILRNGLDSGLKICVVVGGGPTARRYINVARNLGTPETLLDEMGIAVTRLNAMLLGAALGLHDLHVPETPVEAARIVRRNGVAVCGGTHPGHTTDAVAAMIAELLEGPLVIVTNVDGVYDKDPSEPGARKLRELRPEELEELAVRAELKAGGSFVVDPLAAKMISRGQIVTHVVSWEDFRSRGLENVVRGRHNGTIIEG.

9–10 provides a ligand contact to ATP; sequence GS. A UMP-binding site is contributed by G43. ATP-binding residues include G44 and R48. UMP-binding positions include D65 and 112–118; that span reads THPGHTT. T137, N138, Y143, and D146 together coordinate ATP.

The protein belongs to the UMP kinase family. Homohexamer.

The protein localises to the cytoplasm. It catalyses the reaction UMP + ATP = UDP + ADP. It functions in the pathway pyrimidine metabolism; CTP biosynthesis via de novo pathway; UDP from UMP (UMPK route): step 1/1. With respect to regulation, inhibited by UTP. Catalyzes the reversible phosphorylation of UMP to UDP. The protein is Uridylate kinase of Methanopyrus kandleri (strain AV19 / DSM 6324 / JCM 9639 / NBRC 100938).